Consider the following 139-residue polypeptide: Small ribosomal subunit protein bS6 (139 aa).

Residues 119 to 139 (LKGASKVETPTGPESTDIQEK) form a disordered region. Polar residues predominate over residues 130–139 (GPESTDIQEK).

Belongs to the bacterial ribosomal protein bS6 family.

In terms of biological role, binds together with bS18 to 16S ribosomal RNA. This chain is Small ribosomal subunit protein bS6, found in Borreliella burgdorferi (strain ZS7) (Borrelia burgdorferi).